The primary structure comprises 575 residues: Sulfite reductase [NADPH] hemoprotein beta-component (575 aa).

[4Fe-4S] cluster contacts are provided by Cys-440, Cys-446, Cys-485, and Cys-489. Cys-489 contributes to the siroheme binding site.

It belongs to the nitrite and sulfite reductase 4Fe-4S domain family. In terms of assembly, alpha(8)-beta(8). The alpha component is a flavoprotein, the beta component is a hemoprotein. Siroheme serves as cofactor. [4Fe-4S] cluster is required as a cofactor.

The enzyme catalyses hydrogen sulfide + 3 NADP(+) + 3 H2O = sulfite + 3 NADPH + 4 H(+). It functions in the pathway sulfur metabolism; hydrogen sulfide biosynthesis; hydrogen sulfide from sulfite (NADPH route): step 1/1. In terms of biological role, component of the sulfite reductase complex that catalyzes the 6-electron reduction of sulfite to sulfide. This is one of several activities required for the biosynthesis of L-cysteine from sulfate. This chain is Sulfite reductase [NADPH] hemoprotein beta-component, found in Chromohalobacter salexigens (strain ATCC BAA-138 / DSM 3043 / CIP 106854 / NCIMB 13768 / 1H11).